The chain runs to 300 residues: Homoserine kinase (300 aa).

87–97 provides a ligand contact to ATP; sequence PISRGLGSSSA.

This sequence belongs to the GHMP kinase family. Homoserine kinase subfamily.

The protein localises to the cytoplasm. The enzyme catalyses L-homoserine + ATP = O-phospho-L-homoserine + ADP + H(+). It functions in the pathway amino-acid biosynthesis; L-threonine biosynthesis; L-threonine from L-aspartate: step 4/5. Catalyzes the ATP-dependent phosphorylation of L-homoserine to L-homoserine phosphate. In Clostridium kluyveri (strain ATCC 8527 / DSM 555 / NBRC 12016 / NCIMB 10680 / K1), this protein is Homoserine kinase.